A 240-amino-acid polypeptide reads, in one-letter code: Biosynthetic peptidoglycan transglycosylase (240 aa).

Residues 12-31 (ALMWFMVGSVLLVLLLRFVP) form a helical membrane-spanning segment.

Belongs to the glycosyltransferase 51 family.

Its subcellular location is the cell inner membrane. It catalyses the reaction [GlcNAc-(1-&gt;4)-Mur2Ac(oyl-L-Ala-gamma-D-Glu-L-Lys-D-Ala-D-Ala)](n)-di-trans,octa-cis-undecaprenyl diphosphate + beta-D-GlcNAc-(1-&gt;4)-Mur2Ac(oyl-L-Ala-gamma-D-Glu-L-Lys-D-Ala-D-Ala)-di-trans,octa-cis-undecaprenyl diphosphate = [GlcNAc-(1-&gt;4)-Mur2Ac(oyl-L-Ala-gamma-D-Glu-L-Lys-D-Ala-D-Ala)](n+1)-di-trans,octa-cis-undecaprenyl diphosphate + di-trans,octa-cis-undecaprenyl diphosphate + H(+). It participates in cell wall biogenesis; peptidoglycan biosynthesis. Peptidoglycan polymerase that catalyzes glycan chain elongation from lipid-linked precursors. The sequence is that of Biosynthetic peptidoglycan transglycosylase from Pseudomonas fluorescens (strain ATCC BAA-477 / NRRL B-23932 / Pf-5).